We begin with the raw amino-acid sequence, 310 residues long: Carbamate kinase (310 aa).

Belongs to the carbamate kinase family. In terms of assembly, homodimer.

It localises to the cytoplasm. The enzyme catalyses hydrogencarbonate + NH4(+) + ATP = carbamoyl phosphate + ADP + H2O + H(+). It functions in the pathway amino-acid degradation; L-arginine degradation via ADI pathway. This Haemophilus influenzae (strain ATCC 51907 / DSM 11121 / KW20 / Rd) protein is Carbamate kinase.